The following is a 333-amino-acid chain: Glyceraldehyde-3-phosphate dehydrogenase (333 aa).

NAD(+)-binding positions include 11 to 12, Asp33, Arg78, and Ser120; that span reads RI. Residues 149 to 151, Thr180, 209 to 210, and Arg232 each bind D-glyceraldehyde 3-phosphate; these read SCT and TG. Cys150 functions as the Nucleophile in the catalytic mechanism. S-nitrosocysteine is present on Cys150. Position 314 (Asn314) interacts with NAD(+).

This sequence belongs to the glyceraldehyde-3-phosphate dehydrogenase family. Homotetramer. S-nitrosylation of Cys-150 leads to translocation to the nucleus.

The protein localises to the cytoplasm. The protein resides in the cytosol. It is found in the cytoskeleton. It localises to the nucleus. It carries out the reaction D-glyceraldehyde 3-phosphate + phosphate + NAD(+) = (2R)-3-phospho-glyceroyl phosphate + NADH + H(+). It catalyses the reaction S-nitroso-L-cysteinyl-[GAPDH] + L-cysteinyl-[protein] = L-cysteinyl-[GAPDH] + S-nitroso-L-cysteinyl-[protein]. The protein operates within carbohydrate degradation; glycolysis; pyruvate from D-glyceraldehyde 3-phosphate: step 1/5. Functionally, has both glyceraldehyde-3-phosphate dehydrogenase and nitrosylase activities, thereby playing a role in glycolysis and nuclear functions, respectively. Glyceraldehyde-3-phosphate dehydrogenase is a key enzyme in glycolysis that catalyzes the first step of the pathway by converting D-glyceraldehyde 3-phosphate (G3P) into 3-phospho-D-glyceroyl phosphate. Participates in nuclear events including transcription, RNA transport, DNA replication and apoptosis. Nuclear functions are probably due to the nitrosylase activity that mediates cysteine S-nitrosylation of nuclear target proteins such as SIRT1, HDAC2 and PRKDC. The polypeptide is Glyceraldehyde-3-phosphate dehydrogenase (Danio rerio (Zebrafish)).